A 239-amino-acid chain; its full sequence is Cysteine-rich venom protein kaouthin-1 (239 aa).

An N-terminal signal peptide occupies residues 1–18; it reads MIAFSLLCLAAVLRQSFG. The region spanning 37–165 is the SCP domain; sequence VDLHNSLRRR…AWSYFYVCQY (129 aa). Cystine bridges form between Cys74/Cys152, Cys91/Cys166, Cys147/Cys163, Cys185/Cys192, Cys188/Cys197, Cys201/Cys234, Cys210/Cys228, and Cys219/Cys232. Residues 201 to 234 form the ShKT domain; the sequence is CTIYNKLTNCDSLLKQGSCQDDWIKSNCPASCFC.

The protein belongs to the CRISP family. As to expression, expressed by the venom gland.

The protein localises to the secreted. Its function is as follows. Inhibits calcium-activated potassium channels (KCa), voltage-gated potassium channel (Kv), and the calcium release channel/ryanodine receptor (RyR). This chain is Cysteine-rich venom protein kaouthin-1, found in Naja kaouthia (Monocled cobra).